We begin with the raw amino-acid sequence, 72 residues long: DNA-directed RNA polymerase subunit omega (72 aa).

This sequence belongs to the RNA polymerase subunit omega family. In terms of assembly, the RNAP catalytic core consists of 2 alpha, 1 beta, 1 beta' and 1 omega subunit. When a sigma factor is associated with the core the holoenzyme is formed, which can initiate transcription.

The enzyme catalyses RNA(n) + a ribonucleoside 5'-triphosphate = RNA(n+1) + diphosphate. Functionally, promotes RNA polymerase assembly. Latches the N- and C-terminal regions of the beta' subunit thereby facilitating its interaction with the beta and alpha subunits. The sequence is that of DNA-directed RNA polymerase subunit omega from Laribacter hongkongensis (strain HLHK9).